We begin with the raw amino-acid sequence, 783 residues long: BMP/retinoic acid-inducible neural-specific protein 2 (783 aa).

The signal sequence occupies residues 1–33; the sequence is MRWPCSSWFRGLWPEAAPWAVLLALGVPGWVLA. One can recognise an MACPF domain in the interval 85-281; that stretch reads RYRIYREFAR…FVAAALSYIT (197 aa). N-linked (GlcNAc...) asparagine glycans are attached at residues Asn-185, Asn-354, Asn-473, Asn-579, Asn-626, and Asn-658.

It belongs to the BRINP family. In terms of tissue distribution, weakly expressed in embryonic stem (ES) cells. Strongly expressed in ES-derived neural stem cells (NSCs).

Its subcellular location is the secreted. In terms of biological role, inhibits neuronal cell proliferation by negative regulation of the cell cycle transition. The protein is BMP/retinoic acid-inducible neural-specific protein 2 (Brinp2) of Mus musculus (Mouse).